The chain runs to 386 residues: Zinc transporter 7-A (386 aa).

The Cytoplasmic portion of the chain corresponds to 1–37; the sequence is MLPLSIKDDEYKPPKFNLARKVSGWIRSIFSDSTSRN. A helical membrane pass occupies residues 38–58; that stretch reads LFCFLCLNLSFAFVELFYGIW. Over 59-67 the chain is Lumenal; the sequence is SNSLGLISD. A helical membrane pass occupies residues 68-88; sequence SFHMFFDCTALLAGLAASVIS. Over 89-102 the chain is Cytoplasmic; the sequence is RWKTNEAFSYGYVR. The chain crosses the membrane as a helical span at residues 103 to 123; it reads AEVLAGFVNGLFLIFTAFFIF. Over 124 to 140 the chain is Lumenal; sequence SEGVERALDTPEVHHER. The helical transmembrane segment at 141–161 threads the bilayer; the sequence is LLPVSIMGLLVNIIGIFVFQH. The tract at residues 161–222 is his-rich loop; that stretch reads HGGGHGHSHE…GHSHDHSPKH (62 aa). At 162–246 the chain is on the cytoplasmic side; it reads GGGHGHSHES…KGSSKQILEG (85 aa). A disordered region spans residues 167–239; it reads HSHESGHGHS…DEPPEEHKGS (73 aa). Over residues 228 to 238 the composition is skewed to basic and acidic residues; it reads CHDEPPEEHKG. The helical transmembrane segment at 247 to 267 threads the bilayer; sequence VFLHIVADTLGSVGVIFSTIL. Topologically, residues 268 to 272 are lumenal; sequence MQRYG. Residues 273-293 form a helical membrane-spanning segment; that stretch reads LMIADPICSMLIALLIFVSVI. Topologically, residues 294–386 are cytoplasmic; sequence PLLKQSIGIL…LYVQIDFAAI (93 aa).

It belongs to the cation diffusion facilitator (CDF) transporter (TC 2.A.4) family. SLC30A subfamily. In terms of assembly, homooligomer.

It is found in the golgi apparatus membrane. Its subcellular location is the cytoplasmic vesicle. The protein resides in the golgi apparatus. The protein localises to the trans-Golgi network. It localises to the sarcoplasmic reticulum. It is found in the mitochondrion. It catalyses the reaction Zn(2+)(in) = Zn(2+)(out). Zinc ion transporter mediating zinc entry from the cytosol into the lumen of organelles along the secretory pathway. By contributing to zinc ion homeostasis within the early secretory pathway, regulates the activation and folding of enzymes like alkaline phosphatases. This chain is Zinc transporter 7-A (slc30a7-a), found in Xenopus laevis (African clawed frog).